Consider the following 748-residue polypeptide: MGQTGKKSEKGPVCWRKRVKSEYMALRQLKKFRRADEVKSMFNTNRQKIMERTEILNQEWKQRRIQPVHIMTTVSSLRGTRECSVTSDLDFPKQVIPLKTLTAVASVPIMYSWSPLQQNFMVEDETVLHNIPYMGDEVLDQDGTFIEELIKNYDGKVHGDRECGFINDEIFVELVNALAQYSDYEDDEDGDDNQDDEQDDTAKDQDDNMEDKETQPLRKFPSDKIFEAISSMFPDKGTSEELKEKYKELTEQQLPGALPPECTPNIDGPNAKSVQREQSLHSFHTLFCRPCFKYDCFLHPFHATPNTYKRKNNEAANDGKPCGPHCYQLLEGAREFAAALTAERIKTPPKRPSGRRRGRLPNNTSRPSTPTVNVSEAKDTDSDREAGTETGGESNDKEEEEKKDETSSSSEANSRCQTPIKMKPNIEPPENVEWSGAEASLFRVLIGTYYDNFCAIARLIGTKTCRQVYEFRVKESSIISPVIAEDVDTPPRKKKRKHRLWAAHCRKIQLKKDGSSNHVYNYQPCDHPRQPCDSSCPCVIAQNFCEKFCQCSSECQNRFPGCRCKAQCNTKQCPCYLAVRECDPDLCLTCGAADHWDSKNVSCKNCSIQRGSKKHLLLAPSDVAGWGIFINDTVQKNEFISEYCGEIISQDEADRRGKVYDKYMCSFLFNLNNDFVVDATRKGNKIRFANHSVNPNCYAKVMMVNGDHRIGIFAKRAIQTGEELFFDYRYSQADALKYVGIEREMEIP.

Positions 184-199 are enriched in acidic residues; the sequence is YEDDEDGDDNQDDEQD. 2 disordered regions span residues 184 to 220 and 342 to 428; these read YEDD…LRKF and AERI…NIEP. A compositionally biased stretch (basic and acidic residues) spans 200 to 220; that stretch reads DTAKDQDDNMEDKETQPLRKF. Positions 347-359 are enriched in basic residues; the sequence is TPPKRPSGRRRGR. The segment covering 362-374 has biased composition (polar residues); sequence NNTSRPSTPTVNV. Positions 376–387 are enriched in basic and acidic residues; it reads EAKDTDSDREAG. The region spanning 505–607 is the CXC domain; it reads CRKIQLKKDG…SKNVSCKNCS (103 aa). The SET domain maps to 614-729; the sequence is KHLLLAPSDV…TGEELFFDYR (116 aa).

This sequence belongs to the class V-like SAM-binding methyltransferase superfamily. Histone-lysine methyltransferase family. EZ subfamily. Component of the prc2/eed-ezh2 complex.

It is found in the nucleus. It catalyses the reaction L-lysyl(27)-[histone H3] + 3 S-adenosyl-L-methionine = N(6),N(6),N(6)-trimethyl-L-lysyl(27)-[histone H3] + 3 S-adenosyl-L-homocysteine + 3 H(+). Its function is as follows. Polycomb group (PcG) protein. Catalytic subunit of the prc2/eed-ezh2 complex, which methylates 'Lys-9' and 'Lys-27' of histone H3, leading to transcriptional repression of the affected target gene. May repress transcription of the egr2 and en2 genes. May regulate the circadian clock via histone methylation at the promoter of the circadian genes. This is Histone-lysine N-methyltransferase EZH2 (ezh2-a) from Xenopus laevis (African clawed frog).